The primary structure comprises 75 residues: Putative defensin-like protein 119 (75 aa).

The signal sequence occupies residues 1–25 (MAKSTIFAIFMIVFVLGMVTKETKG). 4 cysteine pairs are disulfide-bonded: cysteine 29/cysteine 73, cysteine 39/cysteine 58, cysteine 44/cysteine 67, and cysteine 48/cysteine 69.

The protein belongs to the DEFL family.

The protein resides in the secreted. The polypeptide is Putative defensin-like protein 119 (LCR53) (Arabidopsis thaliana (Mouse-ear cress)).